Here is a 477-residue protein sequence, read N- to C-terminus: Bifunctional protein HldE (477 aa).

Positions 1–318 are ribokinase; sequence MKVTLPEFER…ENAVRGRAET (318 aa). Position 179 is an N6-acetyllysine (K179). 195–198 is a binding site for ATP; that stretch reads NLSE. D264 is an active-site residue. The cytidylyltransferase stretch occupies residues 344–477; that stretch reads MTNGVFDILH…IKKIQQDKKG (134 aa).

This sequence in the N-terminal section; belongs to the carbohydrate kinase PfkB family. The protein in the C-terminal section; belongs to the cytidylyltransferase family. As to quaternary structure, homodimer.

It catalyses the reaction D-glycero-beta-D-manno-heptose 7-phosphate + ATP = D-glycero-beta-D-manno-heptose 1,7-bisphosphate + ADP + H(+). The enzyme catalyses D-glycero-beta-D-manno-heptose 1-phosphate + ATP + H(+) = ADP-D-glycero-beta-D-manno-heptose + diphosphate. It functions in the pathway nucleotide-sugar biosynthesis; ADP-L-glycero-beta-D-manno-heptose biosynthesis; ADP-L-glycero-beta-D-manno-heptose from D-glycero-beta-D-manno-heptose 7-phosphate: step 1/4. Its pathway is nucleotide-sugar biosynthesis; ADP-L-glycero-beta-D-manno-heptose biosynthesis; ADP-L-glycero-beta-D-manno-heptose from D-glycero-beta-D-manno-heptose 7-phosphate: step 3/4. In terms of biological role, catalyzes the phosphorylation of D-glycero-D-manno-heptose 7-phosphate at the C-1 position to selectively form D-glycero-beta-D-manno-heptose-1,7-bisphosphate. Catalyzes the ADP transfer from ATP to D-glycero-beta-D-manno-heptose 1-phosphate, yielding ADP-D-glycero-beta-D-manno-heptose. The protein is Bifunctional protein HldE of Shigella dysenteriae serotype 1 (strain Sd197).